Reading from the N-terminus, the 123-residue chain is UPF0102 protein PSPPH_4120 (123 aa).

The protein belongs to the UPF0102 family.

The protein is UPF0102 protein PSPPH_4120 of Pseudomonas savastanoi pv. phaseolicola (strain 1448A / Race 6) (Pseudomonas syringae pv. phaseolicola (strain 1448A / Race 6)).